Reading from the N-terminus, the 802-residue chain is Peptidyl serine alpha-galactosyltransferase (802 aa).

Residues 1-19 (MRWDLITAIVAALVVSVLA) form the signal peptide. At 20–750 (DESGQMAPYR…SEGRFSTLKL (731 aa)) the chain is on the extracellular side. Residues Asn214, Asn275, Asn425, and Asn637 are each glycosylated (N-linked (GlcNAc...) asparagine). The interval 699–741 (RNCPEPGSESTEKISVSRKVGNIETKQTQGSDETKESSGSSES) is disordered. Residues 751–771 (WVIALWLISGVGFLVVMLLVF) traverse the membrane as a helical segment. Residues 772-802 (STRRGRGTTRGKGYRNKRRTSYSNTGFLDTK) lie on the Cytoplasmic side of the membrane. The span at 777-791 (RGTTRGKGYRNKRRT) shows a compositional bias: basic residues. Residues 777–802 (RGTTRGKGYRNKRRTSYSNTGFLDTK) form a disordered region. Over residues 792 to 802 (SYSNTGFLDTK) the composition is skewed to polar residues.

Its subcellular location is the endoplasmic reticulum membrane. Functionally, glycosyltransferase involved in the O-galactosylation of several proteins including extensins. Catalyzes the transfer of alpha-galactosyl to Ser residues. Hydroxylation of proline residues adjacent to the serine acceptor is required for activity. The polypeptide is Peptidyl serine alpha-galactosyltransferase (Arabidopsis thaliana (Mouse-ear cress)).